A 129-amino-acid polypeptide reads, in one-letter code: Follitropin subunit beta (129 aa).

The N-terminal stretch at 1-18 is a signal peptide; sequence MKSVQFCFLFCCWRVICC. 6 cysteine pairs are disulfide-bonded: Cys21–Cys69, Cys35–Cys84, Cys38–Cys122, Cys46–Cys100, Cys50–Cys102, and Cys105–Cys112. N-linked (GlcNAc...) asparagine glycosylation is found at Asn25 and Asn42.

The protein belongs to the glycoprotein hormones subunit beta family. As to quaternary structure, heterodimer. The active follitropin is a heterodimer composed of an alpha chain/CGA shared with other hormones and a unique beta chain/FSHB shown here.

Its subcellular location is the secreted. Its function is as follows. Together with the alpha chain CGA constitutes follitropin, the follicle-stimulating hormone, and provides its biological specificity to the hormone heterodimer. Binds FSHR, a G protein-coupled receptor, on target cells to activate downstream signaling pathways. Follitropin is involved in follicle development and spermatogenesis in reproductive organs. In Panthera tigris altaica (Siberian tiger), this protein is Follitropin subunit beta (FSHB).